Here is a 364-residue protein sequence, read N- to C-terminus: Melatonin receptor type 1B (364 aa).

Over 1–42 (MPENSSIPNCCEASGLAARPSWSGSAGARPPVTARAPWVAPM) the chain is Extracellular. The N-linked (GlcNAc...) asparagine glycan is linked to Asn4. Residues 43-63 (LSTVVVVTTAVDFVGNLLVIL) traverse the membrane as a helical segment. Topologically, residues 64–76 (SVLRNRKLRNAGN) are cytoplasmic. A helical membrane pass occupies residues 77–97 (LFVVSLALADLVIALYPYPLI). The Extracellular portion of the chain corresponds to 98-115 (LVAIIRDGWVLGEAHCKA). The cysteines at positions 113 and 190 are disulfide-linked. A helical transmembrane segment spans residues 116-136 (SAFVMGLSVIGSVFNITAIAI). Topologically, residues 137–155 (NRYCCICHSTTYHRVCSHW) are cytoplasmic. Residues 156-176 (YTPIYISLVWLLTLVALVPNF) form a helical membrane-spanning segment. Residues 177–200 (FVGSLEYDPRIYSCTFIQTASTQY) lie on the Extracellular side of the membrane. Residues 201-221 (TAAVVAIHFLLPMAVVSFCYL) form a helical membrane-spanning segment. Over 222 to 253 (RIWVLVLQARRKAKATRKLRLRPSDLRSFLTM) the chain is Cytoplasmic. The helical transmembrane segment at 254 to 274 (FAVFVVFAICWAPLNCIGLAV) threads the bilayer. At 275–287 (AINPEAMALQVPE) the chain is on the extracellular side. Residues 288–308 (GLFVTSYFLAYFNSCLNAIVY) form a helical membrane-spanning segment. The Cytoplasmic portion of the chain corresponds to 309 to 364 (GLLNQNFRREYKRILLAIWNTRRCIQHASKHCLTEERQGPTPPAARATVPVKEGAL). The disordered stretch occupies residues 343–364 (EERQGPTPPAARATVPVKEGAL). Residues 352-364 (AARATVPVKEGAL) are compositionally biased toward low complexity.

The protein belongs to the G-protein coupled receptor 1 family.

It localises to the cell membrane. Functionally, high affinity receptor for melatonin. The activity of this receptor is mediated by pertussis toxin sensitive G proteins that inhibits adenylate cyclase activity. This is Melatonin receptor type 1B (Mtnr1b) from Mus musculus (Mouse).